A 379-amino-acid chain; its full sequence is Lipoyl synthase, mitochondrial (379 aa).

Cys-106, Cys-111, Cys-117, Cys-137, Cys-141, Cys-144, and Ser-352 together coordinate [4Fe-4S] cluster. The 220-residue stretch at 122-341 (EHGTQTATIM…EERGNALGFL (220 aa)) folds into the Radical SAM core domain.

The protein belongs to the radical SAM superfamily. Lipoyl synthase family. [4Fe-4S] cluster serves as cofactor.

The protein localises to the mitochondrion. It catalyses the reaction [[Fe-S] cluster scaffold protein carrying a second [4Fe-4S](2+) cluster] + N(6)-octanoyl-L-lysyl-[protein] + 2 oxidized [2Fe-2S]-[ferredoxin] + 2 S-adenosyl-L-methionine + 4 H(+) = [[Fe-S] cluster scaffold protein] + N(6)-[(R)-dihydrolipoyl]-L-lysyl-[protein] + 4 Fe(3+) + 2 hydrogen sulfide + 2 5'-deoxyadenosine + 2 L-methionine + 2 reduced [2Fe-2S]-[ferredoxin]. It functions in the pathway protein modification; protein lipoylation via endogenous pathway; protein N(6)-(lipoyl)lysine from octanoyl-[acyl-carrier-protein]: step 2/2. Its function is as follows. Catalyzes the radical-mediated insertion of two sulfur atoms into the C-6 and C-8 positions of the octanoyl moiety bound to the lipoyl domains of lipoate-dependent enzymes, thereby converting the octanoylated domains into lipoylated derivatives. This Drosophila erecta (Fruit fly) protein is Lipoyl synthase, mitochondrial.